Reading from the N-terminus, the 308-residue chain is Olfactory receptor 5H8 (308 aa).

The Extracellular portion of the chain corresponds to Met-1–Phe-28. The helical transmembrane segment at Leu-29–Ile-49 threads the bilayer. Topologically, residues Trp-50–His-56 are cytoplasmic. The helical transmembrane segment at Ile-57–Val-77 threads the bilayer. Topologically, residues Thr-78–Lys-98 are extracellular. Cys-97 and Cys-179 are joined by a disulfide. The helical transmembrane segment at Ile-99 to Ala-119 threads the bilayer. Residues Tyr-120–Pro-133 lie on the Cytoplasmic side of the membrane. A helical transmembrane segment spans residues Val-134–Leu-154. Residues His-155 to Asn-195 lie on the Extracellular side of the membrane. A helical transmembrane segment spans residues Phe-196–Val-216. The Cytoplasmic portion of the chain corresponds to Ser-217 to Ser-238. Residues Thr-239–Val-259 traverse the membrane as a helical segment. At His-260–Asp-270 the chain is on the extracellular side. A helical transmembrane segment spans residues Met-271–Leu-291. At Arg-292 to Val-308 the chain is on the cytoplasmic side.

This sequence belongs to the G-protein coupled receptor 1 family.

The protein resides in the cell membrane. Odorant receptor. This is Olfactory receptor 5H8 from Homo sapiens (Human).